The sequence spans 144 residues: AP-4 complex subunit sigma-1 (144 aa).

It belongs to the adaptor complexes small subunit family. As to quaternary structure, adaptor protein complex 4 (AP-4) is a heterotetramer composed of two large adaptins (epsilon-type subunit AP4E1 and beta-type subunit AP4B1), a medium adaptin (mu-type subunit AP4M1) and a small adaptin (sigma-type AP4S1). As to expression, widely expressed.

The protein localises to the golgi apparatus. It is found in the trans-Golgi network membrane. Its function is as follows. Component of the adaptor protein complex 4 (AP-4). Adaptor protein complexes are vesicle coat components involved both in vesicle formation and cargo selection. They control the vesicular transport of proteins in different trafficking pathways. AP-4 forms a non clathrin-associated coat on vesicles departing the trans-Golgi network (TGN) and may be involved in the targeting of proteins from the trans-Golgi network (TGN) to the endosomal-lysosomal system. It is also involved in protein sorting to the basolateral membrane in epithelial cells and the proper asymmetric localization of somatodendritic proteins in neurons. AP-4 is involved in the recognition and binding of tyrosine-based sorting signals found in the cytoplasmic part of cargos, but may also recognize other types of sorting signal. The protein is AP-4 complex subunit sigma-1 of Homo sapiens (Human).